A 201-amino-acid chain; its full sequence is Riboflavin synthase (201 aa).

Lumazine-binding repeat units lie at residues 1-97 (MFTG…LGGH) and 98-197 (IVQG…ERLM). 2,4-dihydroxypteridine is bound by residues 4–6 (GIV), 47–49 (CLT), 62–67 (DVMAET), 101–103 (GHV), Lys-136, 145–147 (SLT), and 162–167 (SLIPTT).

As to quaternary structure, homotrimer.

The enzyme catalyses 2 6,7-dimethyl-8-(1-D-ribityl)lumazine + H(+) = 5-amino-6-(D-ribitylamino)uracil + riboflavin. The protein operates within cofactor biosynthesis; riboflavin biosynthesis; riboflavin from 2-hydroxy-3-oxobutyl phosphate and 5-amino-6-(D-ribitylamino)uracil: step 2/2. Functionally, catalyzes the dismutation of two molecules of 6,7-dimethyl-8-ribityllumazine, resulting in the formation of riboflavin and 5-amino-6-(D-ribitylamino)uracil. This chain is Riboflavin synthase (ribE), found in Mycobacterium bovis (strain ATCC BAA-935 / AF2122/97).